We begin with the raw amino-acid sequence, 425 residues long: CinA-like protein (425 aa).

The protein belongs to the CinA family.

The polypeptide is CinA-like protein (Mycobacterium marinum (strain ATCC BAA-535 / M)).